The following is a 473-amino-acid chain: Sorting nexin-17 (473 aa).

Positions 1 to 108 constitute a PX domain; it reads MHFSIPETEV…SFLRKAQQET (108 aa). 4 residues coordinate a 1,2-diacyl-sn-glycero-3-phospho-(1D-myo-inositol-3-phosphate): Arg-35, Ser-37, Lys-61, and Arg-74. The Ras-associating domain occupies 114 to 205; sequence EEVQLEIYLS…YRIILRKSYW (92 aa). The interval 114–433 is FERM-like; it reads EEVQLEIYLS…DPNREQVVKL (320 aa). The interval 269-433 is PTB-like F3 module; sequence GYIKFDPCIT…DPNREQVVKL (165 aa). The segment at 391-431 is disordered; that stretch reads SIKKQMQKKRLNGSLQRSDSQQAVKSPPILDSPDPNREQVV. Over residues 403–414 the composition is skewed to polar residues; the sequence is GSLQRSDSQQAV.

Belongs to the sorting nexin family. In terms of assembly, monomer. Interacts with CCDC22, CCDC93, DSCR3 and VPS35L; the interaction with DSCR3 is direct and associates SNX17 with the retriever and CCC complexes.

The protein localises to the cytoplasm. It is found in the early endosome. Its subcellular location is the cytoplasmic vesicle membrane. Critical regulator of endosomal recycling of numerous surface proteins, including integrins, signaling receptor and channels. Binds to NPxY sequences in the cytoplasmic tails of target cargos. Associates with retriever and CCC complexes to prevent lysosomal degradation and promote cell surface recycling of numerous cargos such as integrins ITGB1, ITGB5 and their associated alpha subunits. Also required for maintenance of normal cell surface levels of APP and LRP1. Interacts with membranes containing phosphatidylinositol 3-phosphate (PtdIns(3P)). In Danio rerio (Zebrafish), this protein is Sorting nexin-17 (snx17).